A 61-amino-acid polypeptide reads, in one-letter code: U-poneritoxin(01)-Om5b (61 aa).

The first 23 residues, 1–23 (MKLSALSLAFAIILMMTIMYTKA), serve as a signal peptide directing secretion. A propeptide spanning residues 24–41 (DADASADAEADADAEAEA) is cleaved from the precursor. Gln-59 carries the post-translational modification Glutamine amide.

Belongs to the formicidae venom precursor-01 superfamily. In terms of processing, truncated sequences of this peptide have also been found in the venom. It is possible they have been cleaved in the venom. In terms of tissue distribution, expressed by the venom gland.

It is found in the secreted. Functionally, acidic peptide with potent hemolytic activities. It also shows low antimicrobial activities against E.coli (MIC=50uM), as well as histamine-releasing activity (28.3% at 10 uM). Does not have activity against S.aureus, and S.cerevisiae. The sequence is that of U-poneritoxin(01)-Om5b from Odontomachus monticola (Trap-jaw ant).